The chain runs to 270 residues: MKMTSKKMKDELMKRLSRPEWDFQYDSEKEVLRIEQKDSKKGINVSLPGVVAKWEVNKEKAIEEVAYYVQEALIAMHKEENNAAKILPVIRSTSFPKQAEEGNPFIMTDHTAETRIYYALDSNKTYRLIDERLLQKLGLTEQQVREMALFNARSLGYEFKQDTVAGNTFYFLNTNDGYDATRILNESLLQSMREKISGDMVVAVPHQDVLIIADIVNEIGYDIIAQMTMKFFAEGHVPITSLSFVYEDGDFEPIFILAKNRKKTDGKEKG.

This sequence belongs to the UPF0354 family.

This Bacillus cereus (strain ATCC 10987 / NRS 248) protein is UPF0354 protein BCE_4835.